The primary structure comprises 320 residues: ATP-dependent 6-phosphofructokinase (320 aa).

G12 is an ATP binding site. ADP-binding positions include 22–26 and 55–60; these read RGVVR and RYSVSD. ATP contacts are provided by residues 73-74 and 103-106; these read RF and GDGS. D104 lines the Mg(2+) pocket. A substrate-binding site is contributed by 126 to 128; that stretch reads TID. D128 serves as the catalytic Proton acceptor. R155 is an ADP binding site. Substrate-binding positions include R163 and 170 to 172; that span reads MGR. Residues 186-188, K212, and 214-216 each bind ADP; these read GCE and KKH. Substrate-binding positions include E223, R244, and 250 to 253; that span reads HIQR.

This sequence belongs to the phosphofructokinase type A (PFKA) family. ATP-dependent PFK group I subfamily. Prokaryotic clade 'B1' sub-subfamily. As to quaternary structure, homotetramer. Mg(2+) is required as a cofactor.

The protein resides in the cytoplasm. The catalysed reaction is beta-D-fructose 6-phosphate + ATP = beta-D-fructose 1,6-bisphosphate + ADP + H(+). Its pathway is carbohydrate degradation; glycolysis; D-glyceraldehyde 3-phosphate and glycerone phosphate from D-glucose: step 3/4. With respect to regulation, allosterically activated by ADP and other diphosphonucleosides, and allosterically inhibited by phosphoenolpyruvate. In terms of biological role, catalyzes the phosphorylation of D-fructose 6-phosphate to fructose 1,6-bisphosphate by ATP, the first committing step of glycolysis. In Pectobacterium carotovorum subsp. carotovorum (strain PC1), this protein is ATP-dependent 6-phosphofructokinase.